The sequence spans 275 residues: NH(3)-dependent NAD(+) synthetase (275 aa).

Residue 46 to 53 coordinates ATP; the sequence is GISGGQDS. Position 52 (aspartate 52) interacts with Mg(2+). Residue arginine 140 participates in deamido-NAD(+) binding. An ATP-binding site is contributed by threonine 160. Glutamate 165 contributes to the Mg(2+) binding site. 2 residues coordinate deamido-NAD(+): lysine 173 and aspartate 180. The ATP site is built by lysine 189 and threonine 211. Position 260–261 (260–261) interacts with deamido-NAD(+); that stretch reads HK.

It belongs to the NAD synthetase family. Homodimer.

The catalysed reaction is deamido-NAD(+) + NH4(+) + ATP = AMP + diphosphate + NAD(+) + H(+). It functions in the pathway cofactor biosynthesis; NAD(+) biosynthesis; NAD(+) from deamido-NAD(+) (ammonia route): step 1/1. Functionally, catalyzes the ATP-dependent amidation of deamido-NAD to form NAD. Uses ammonia as a nitrogen source. This is NH(3)-dependent NAD(+) synthetase from Cronobacter sakazakii (strain ATCC BAA-894) (Enterobacter sakazakii).